Consider the following 455-residue polypeptide: Anthocyanidin 3-O-glucosyltransferase (455 aa).

The active-site Proton acceptor is the histidine 18. Histidine 18 serves as a coordination point for an anthocyanidin. Aspartate 118 (charge relay) is an active-site residue. Threonine 139 is a binding site for UDP-alpha-D-glucose. An anthocyanidin is bound at residue histidine 148. UDP-alpha-D-glucose-binding residues include alanine 336, glutamine 338, histidine 353, tryptophan 356, serine 358, and glutamate 361. Glycine 376 contacts an anthocyanidin. UDP-alpha-D-glucose-binding residues include aspartate 377 and glutamine 378.

This sequence belongs to the UDP-glycosyltransferase family.

It carries out the reaction an anthocyanidin + UDP-alpha-D-glucose + H(+) = an anthocyanidin 3-O-beta-D-glucoside + UDP. It functions in the pathway pigment biosynthesis; anthocyanin biosynthesis. In the presence of other necessary color factors, this glycosylation reaction allows the accumulation of anthocyanin pigments. This is Anthocyanidin 3-O-glucosyltransferase (BZ1) from Hordeum vulgare (Barley).